The chain runs to 201 residues: IMP cyclohydrolase (201 aa).

The protein belongs to the archaeal IMP cyclohydrolase family.

The catalysed reaction is IMP + H2O = 5-formamido-1-(5-phospho-D-ribosyl)imidazole-4-carboxamide. The protein operates within purine metabolism; IMP biosynthesis via de novo pathway; IMP from 5-formamido-1-(5-phospho-D-ribosyl)imidazole-4-carboxamide: step 1/1. Catalyzes the cyclization of 5-formylamidoimidazole-4-carboxamide ribonucleotide to IMP. The sequence is that of IMP cyclohydrolase from Methanococcus maripaludis (strain C6 / ATCC BAA-1332).